Reading from the N-terminus, the 175-residue chain is Adenine phosphoribosyltransferase (175 aa).

Belongs to the purine/pyrimidine phosphoribosyltransferase family. In terms of assembly, homodimer.

The protein resides in the cytoplasm. The catalysed reaction is AMP + diphosphate = 5-phospho-alpha-D-ribose 1-diphosphate + adenine. Its pathway is purine metabolism; AMP biosynthesis via salvage pathway; AMP from adenine: step 1/1. Catalyzes a salvage reaction resulting in the formation of AMP, that is energically less costly than de novo synthesis. The polypeptide is Adenine phosphoribosyltransferase (Lacticaseibacillus paracasei (strain ATCC 334 / BCRC 17002 / CCUG 31169 / CIP 107868 / KCTC 3260 / NRRL B-441) (Lactobacillus paracasei)).